The primary structure comprises 296 residues: Glycine--tRNA ligase alpha subunit (296 aa).

Belongs to the class-II aminoacyl-tRNA synthetase family. As to quaternary structure, tetramer of two alpha and two beta subunits.

The protein resides in the cytoplasm. The catalysed reaction is tRNA(Gly) + glycine + ATP = glycyl-tRNA(Gly) + AMP + diphosphate. This chain is Glycine--tRNA ligase alpha subunit, found in Francisella tularensis subsp. holarctica (strain FTNF002-00 / FTA).